The following is a 151-amino-acid chain: IFN signaling evasion protein OPG029 (151 aa).

This sequence belongs to the orthopoxvirus OPG029 family. Interacts with host TANK, TBKBP1 and AZI2; these interactions prevent interferon production. Interacts with host STAT2.

Functionally, prevents establishment of cellular antiviral state by blocking virus-induced phosphorylation and activation of interferon regulatory factors 3/IRF3 and 7/IRF7, transcription factors critical for the induction of interferons alpha and beta. This blockage is produced through the inhibition of host TBK1, by binding host TBK1 adapter proteins TBKBP1 and AZI2, thereby producing a strong inhibition of the phosphorylation and activation of IRF3 and IRF7. Also acts as an inhibitor of the cellular response to type I IFN by interacting with host STAT2. Mechanistically, exerts its inhibitory effect after host ISGF3 complex (composed of STAT1, STAT2 and IRF9) binding to the interferon stimulated response element (ISRE). The sequence is that of IFN signaling evasion protein OPG029 (OPG029) from Homo sapiens (Human).